Here is a 332-residue protein sequence, read N- to C-terminus: Spherulin-4 (332 aa).

The N-terminal stretch at 1–22 (MNIKIVVLVIFAILLGSALAWH) is a signal peptide. The segment at 26–60 (HHNPTKAPTEAPHRGGGGGGGHNTPAPTQPPRQNT) is disordered.

The sequence is that of Spherulin-4 from Physarum polycephalum (Slime mold).